We begin with the raw amino-acid sequence, 860 residues long: Leucine--tRNA ligase (860 aa).

The short motif at 42–52 (PYPSGRLHMGH) is the 'HIGH' region element. Positions 619 to 623 (KMSKS) match the 'KMSKS' region motif. Lysine 622 lines the ATP pocket.

Belongs to the class-I aminoacyl-tRNA synthetase family.

Its subcellular location is the cytoplasm. The catalysed reaction is tRNA(Leu) + L-leucine + ATP = L-leucyl-tRNA(Leu) + AMP + diphosphate. This chain is Leucine--tRNA ligase, found in Escherichia coli (strain ATCC 8739 / DSM 1576 / NBRC 3972 / NCIMB 8545 / WDCM 00012 / Crooks).